A 148-amino-acid chain; its full sequence is Large ribosomal subunit protein bL9 (148 aa).

The protein belongs to the bacterial ribosomal protein bL9 family.

Binds to the 23S rRNA. The sequence is that of Large ribosomal subunit protein bL9 from Ectopseudomonas mendocina (strain ymp) (Pseudomonas mendocina).